A 555-amino-acid polypeptide reads, in one-letter code: Alpha-copaene synthase (555 aa).

The Mg(2+) site is built by Asp-312, Asp-316, Asp-452, Ser-456, and Glu-460. The short motif at 312-316 is the DDXXD motif element; that stretch reads DDTYD.

The protein belongs to the terpene synthase family. Mg(2+) is required as a cofactor. Mainly expressed in sunflower trichomes.

It carries out the reaction (2E,6E)-farnesyl diphosphate = alpha-copaene + diphosphate. It catalyses the reaction (2E,6E)-farnesyl diphosphate = alpha-muurolene + diphosphate. The catalysed reaction is (2E,6E)-farnesyl diphosphate = alpha-humulene + diphosphate. Its pathway is secondary metabolite biosynthesis; terpenoid biosynthesis. Its function is as follows. Involved in the biosynthesis of germacrene-derived sesquiterpene lactones. Catalyzes the cyclization of farnesyl diphosphate to alpha-copaene, delta-cadinene, alpha-muurolene, beta-caryophyllene and alpha-humulene. The polypeptide is Alpha-copaene synthase (CS) (Helianthus annuus (Common sunflower)).